Consider the following 141-residue polypeptide: Large ribosomal subunit protein bL17 (141 aa).

Belongs to the bacterial ribosomal protein bL17 family. As to quaternary structure, part of the 50S ribosomal subunit. Contacts protein L32.

In Chlamydia trachomatis serovar D (strain ATCC VR-885 / DSM 19411 / UW-3/Cx), this protein is Large ribosomal subunit protein bL17.